Reading from the N-terminus, the 175-residue chain is Gamma-crystallin B (175 aa).

Beta/gamma crystallin 'Greek key' domains follow at residues 2–40 and 41–83; these read GKIT…RVES and GCWM…HLIP. Residues 84 to 88 form a connecting peptide region; it reads PHSGT. Beta/gamma crystallin 'Greek key' domains follow at residues 89–129 and 130–172; these read YRMK…NVLE and GSWI…RRVM.

It belongs to the beta/gamma-crystallin family. As to quaternary structure, monomer.

Functionally, crystallins are the dominant structural components of the vertebrate eye lens. The sequence is that of Gamma-crystallin B (CRYGB) from Macaca mulatta (Rhesus macaque).